Consider the following 461-residue polypeptide: MNTSHKTLKTIAILGQPNVGKSSLFNRLARERIAITSDFAGTTRDINKRKIALNGHEVELLDTGGMAKDALLSKEIKALNLKAAQMSDLILYVVDGKSIPSDEDLKLFREVFKTNPNCFLVINKIDNDKEKERAYAFSSFGMPKSFNISVSHNRGISTLIDAILSALDLNQIIEQDLDADILESLENNAPKEEIKEEEIIQVGIIGRVNVGKSSLLNALTKKERSLVSSVAGTTIDPIDETILIGDQKICFVDTAGIRHRGKILGIEKYALERTQKALEKSHIALLVLDVSAPFVELDEKISSLADKHSLGIILILNKWDIRYAPYEEIMATLKRKFRFLEYAPIITTSCLKTHHIDEIKHKIIEVYECFSKRIPTSLLNSVINQATQKHPLPSDGGKLVKVYYATQFATKPPQISLIMNRPKALHFSYKRYLINTLRKEFNFLGTPLILNAKDKKSAQQN.

2 consecutive EngA-type G domains span residues 9–171 (KTIA…DLNQ) and 200–371 (IQVG…ECFS). GTP contacts are provided by residues 15–22 (GQPNVGKS), 62–66 (DTGGM), 123–126 (NKID), 206–213 (GRVNVGKS), 253–257 (DTAGI), and 317–320 (NKWD). In terms of domain architecture, KH-like spans 372-456 (KRIPTSLLNS…PLILNAKDKK (85 aa)).

Belongs to the TRAFAC class TrmE-Era-EngA-EngB-Septin-like GTPase superfamily. EngA (Der) GTPase family. Associates with the 50S ribosomal subunit.

Functionally, GTPase that plays an essential role in the late steps of ribosome biogenesis. This is GTPase Der from Helicobacter pylori (strain Shi470).